The following is a 25-amino-acid chain: Dermaseptin-5.1TR (25 aa).

Position 25 is a valine amide (Val-25).

In terms of tissue distribution, expressed by the skin glands.

It is found in the secreted. In terms of biological role, has antimicrobial activity. This chain is Dermaseptin-5.1TR, found in Phyllomedusa trinitatis (Trinidad leaf frog).